The sequence spans 398 residues: Metal tolerance protein 1 (398 aa).

Over 1 to 56 (MESSSPHHSHIVEVNVGKSDEERIIVASKVCGEAPCGFSDSKNASGDAHERSASMR) the chain is Cytoplasmic. The chain crosses the membrane as a helical span at residues 57 to 77 (KLCIAVVLCLVFMSVEVVGGI). Over 78–89 (KANSLAILTDAA) the chain is Vacuolar. A helical membrane pass occupies residues 90–110 (HLLSDVAAFAISLFSLWAAGW). The Cytoplasmic portion of the chain corresponds to 111 to 122 (EATPRQTYGFFR). The helical transmembrane segment at 123–143 (IEILGALVSIQLIWLLTGILV) threads the bilayer. Residues 144-159 (YEAIIRIVTETSEVNG) are Vacuolar-facing. The helical transmembrane segment at 160 to 180 (FLMFLVAAFGLVVNIIMAVLL) threads the bilayer. At 181–263 (GHDHGHSHGH…KRNINLQGAY (83 aa)) the chain is on the cytoplasmic side. Residues 182 to 232 (HDHGHSHGHGHGHGHDHHNHSHGVTVTTHHHHHDHEHGHSHGHGEDKHHAH) are required for zinc-binding. Positions 186–232 (HSHGHGHGHGHDHHNHSHGVTVTTHHHHHDHEHGHSHGHGEDKHHAH) are disordered. Over residues 187 to 202 (SHGHGHGHGHDHHNHS) the composition is skewed to basic residues. Positions 216 to 232 (HEHGHSHGHGEDKHHAH) are enriched in basic and acidic residues. The helical transmembrane segment at 264-284 (LHVLGDSIQSVGVMIGGAIIW) threads the bilayer. Over 285–290 (YNPEWK) the chain is Vacuolar. A helical transmembrane segment spans residues 291 to 311 (IVDLICTLAFSVIVLGTTINM). Residues 312 to 398 (IRNILEVLME…ISHVTIQIER (87 aa)) are Cytoplasmic-facing.

It belongs to the cation diffusion facilitator (CDF) transporter (TC 2.A.4) family. SLC30A subfamily. In terms of tissue distribution, ubiquitously expressed at low levels.

It localises to the vacuole membrane. Its function is as follows. Mediates zinc accumulation in roots and confers resistance to zinc. Involved in sequestration of excess zinc in the cytoplasm into vacuoles to maintain zinc homeostasis. Can also transport cadmium with a low efficiency. The protein is Metal tolerance protein 1 of Arabidopsis thaliana (Mouse-ear cress).